We begin with the raw amino-acid sequence, 326 residues long: Amino acid--[acyl-carrier-protein] ligase 1 (326 aa).

Cys-131 is a Zn(2+) binding site. ATP is bound by residues Arg-159, Glu-161, and 168–169; that span reads RL. Position 176 (Glu-176) interacts with Zn(2+). Position 176 (Glu-176) interacts with an L-alpha-amino acid. ATP is bound by residues Lys-235 and 250–253; that span reads ACMS. Cys-279 is a binding site for Zn(2+). Arg-286 lines the ATP pocket.

The protein belongs to the class-II aminoacyl-tRNA synthetase family. Amino acid--[acyl-carrier-protein] ligase subfamily. Homodimer. Requires Zn(2+) as cofactor.

It carries out the reaction an L-alpha-amino acid + holo-[ACP] + ATP = an L-alpha-aminoacyl-[ACP] + AMP + diphosphate. Functionally, catalyzes the ATP-dependent activation of L-glycine and its transfer to the phosphopantetheine prosthetic group covalently attached to the vicinal carrier protein bsr0959 of yet unknown function. May participate in nonribosomal peptide synthesis or related processes. L-alanine is a poor substrate whereas L-serine or D-amino acids are not substrates for ATP-dependent activation. Does not display tRNA aminoacylation activity. The sequence is that of Amino acid--[acyl-carrier-protein] ligase 1 from Bradyrhizobium diazoefficiens (strain JCM 10833 / BCRC 13528 / IAM 13628 / NBRC 14792 / USDA 110).